Consider the following 446-residue polypeptide: Histidine--tRNA ligase (446 aa).

The protein belongs to the class-II aminoacyl-tRNA synthetase family. In terms of assembly, homodimer.

The protein localises to the cytoplasm. It carries out the reaction tRNA(His) + L-histidine + ATP = L-histidyl-tRNA(His) + AMP + diphosphate + H(+). The polypeptide is Histidine--tRNA ligase (Burkholderia ambifaria (strain MC40-6)).